A 369-amino-acid chain; its full sequence is Lipoyl synthase, mitochondrial (369 aa).

The transit peptide at M1 to R32 directs the protein to the mitochondrion. [4Fe-4S] cluster contacts are provided by C106, C111, C117, C136, C140, C143, and S351. In terms of domain architecture, Radical SAM core spans N121–L340.

Belongs to the radical SAM superfamily. Lipoyl synthase family. [4Fe-4S] cluster serves as cofactor.

It is found in the mitochondrion. The catalysed reaction is [[Fe-S] cluster scaffold protein carrying a second [4Fe-4S](2+) cluster] + N(6)-octanoyl-L-lysyl-[protein] + 2 oxidized [2Fe-2S]-[ferredoxin] + 2 S-adenosyl-L-methionine + 4 H(+) = [[Fe-S] cluster scaffold protein] + N(6)-[(R)-dihydrolipoyl]-L-lysyl-[protein] + 4 Fe(3+) + 2 hydrogen sulfide + 2 5'-deoxyadenosine + 2 L-methionine + 2 reduced [2Fe-2S]-[ferredoxin]. The protein operates within protein modification; protein lipoylation via endogenous pathway; protein N(6)-(lipoyl)lysine from octanoyl-[acyl-carrier-protein]: step 2/2. Its function is as follows. Catalyzes the radical-mediated insertion of two sulfur atoms into the C-6 and C-8 positions of the octanoyl moiety bound to the lipoyl domains of lipoate-dependent enzymes, thereby converting the octanoylated domains into lipoylated derivatives. The sequence is that of Lipoyl synthase, mitochondrial from Eremothecium gossypii (strain ATCC 10895 / CBS 109.51 / FGSC 9923 / NRRL Y-1056) (Yeast).